A 503-amino-acid chain; its full sequence is Galactose/methyl galactoside import ATP-binding protein MglA 2 (503 aa).

2 consecutive ABC transporter domains span residues 11-246 and 257-503; these read LEMT…VGRE and TPKE…SRYL. 43 to 50 contributes to the ATP binding site; the sequence is GENGAGKS.

The protein belongs to the ABC transporter superfamily. Galactose/methyl galactoside importer (TC 3.A.1.2.3) family. The complex is composed of one ATP-binding protein (MglA), two transmembrane proteins (MglC) and a solute-binding protein (MglB).

Its subcellular location is the cell inner membrane. The catalysed reaction is D-galactose(out) + ATP + H2O = D-galactose(in) + ADP + phosphate + H(+). The enzyme catalyses methyl beta-D-galactoside(out) + ATP + H2O = methyl beta-D-galactoside(in) + ADP + phosphate + H(+). Its function is as follows. Part of the ABC transporter complex MglABC involved in galactose/methyl galactoside import. Responsible for energy coupling to the transport system. The chain is Galactose/methyl galactoside import ATP-binding protein MglA 2 from Photobacterium profundum (strain SS9).